We begin with the raw amino-acid sequence, 341 residues long: S-adenosylmethionine:tRNA ribosyltransferase-isomerase (341 aa).

This sequence belongs to the QueA family. As to quaternary structure, monomer.

The protein resides in the cytoplasm. It catalyses the reaction 7-aminomethyl-7-carbaguanosine(34) in tRNA + S-adenosyl-L-methionine = epoxyqueuosine(34) in tRNA + adenine + L-methionine + 2 H(+). It functions in the pathway tRNA modification; tRNA-queuosine biosynthesis. Functionally, transfers and isomerizes the ribose moiety from AdoMet to the 7-aminomethyl group of 7-deazaguanine (preQ1-tRNA) to give epoxyqueuosine (oQ-tRNA). The protein is S-adenosylmethionine:tRNA ribosyltransferase-isomerase of Herminiimonas arsenicoxydans.